Reading from the N-terminus, the 290-residue chain is 4-hydroxy-tetrahydrodipicolinate synthase (290 aa).

Position 44 (Thr-44) interacts with pyruvate. Tyr-132 (proton donor/acceptor) is an active-site residue. Lys-160 serves as the catalytic Schiff-base intermediate with substrate. Ile-202 contributes to the pyruvate binding site.

The protein belongs to the DapA family. As to quaternary structure, homotetramer; dimer of dimers.

It is found in the cytoplasm. It carries out the reaction L-aspartate 4-semialdehyde + pyruvate = (2S,4S)-4-hydroxy-2,3,4,5-tetrahydrodipicolinate + H2O + H(+). It participates in amino-acid biosynthesis; L-lysine biosynthesis via DAP pathway; (S)-tetrahydrodipicolinate from L-aspartate: step 3/4. Catalyzes the condensation of (S)-aspartate-beta-semialdehyde [(S)-ASA] and pyruvate to 4-hydroxy-tetrahydrodipicolinate (HTPA). The chain is 4-hydroxy-tetrahydrodipicolinate synthase from Trichlorobacter lovleyi (strain ATCC BAA-1151 / DSM 17278 / SZ) (Geobacter lovleyi).